Consider the following 158-residue polypeptide: MAKKISDPNYKVIAENRRARFDYAIESDLECGIMLEGSEVKALRGGGSNIADSYAAVENGELWLVNAYIPPYEQAKMFKHEERRRRKLLVSRKELANLWNATQRKGMTLVPLVLYFNHKGIAKMKLGIAKGKKIHDKRETEAKRDWNRQKQRLLKDNA.

The segment at 133–158 (KIHDKRETEAKRDWNRQKQRLLKDNA) is disordered. Residues 136 to 158 (DKRETEAKRDWNRQKQRLLKDNA) are compositionally biased toward basic and acidic residues.

This sequence belongs to the SmpB family.

It is found in the cytoplasm. Required for rescue of stalled ribosomes mediated by trans-translation. Binds to transfer-messenger RNA (tmRNA), required for stable association of tmRNA with ribosomes. tmRNA and SmpB together mimic tRNA shape, replacing the anticodon stem-loop with SmpB. tmRNA is encoded by the ssrA gene; the 2 termini fold to resemble tRNA(Ala) and it encodes a 'tag peptide', a short internal open reading frame. During trans-translation Ala-aminoacylated tmRNA acts like a tRNA, entering the A-site of stalled ribosomes, displacing the stalled mRNA. The ribosome then switches to translate the ORF on the tmRNA; the nascent peptide is terminated with the 'tag peptide' encoded by the tmRNA and targeted for degradation. The ribosome is freed to recommence translation, which seems to be the essential function of trans-translation. This Ruegeria pomeroyi (strain ATCC 700808 / DSM 15171 / DSS-3) (Silicibacter pomeroyi) protein is SsrA-binding protein.